A 624-amino-acid polypeptide reads, in one-letter code: 1-deoxy-D-xylulose-5-phosphate synthase (624 aa).

Thiamine diphosphate contacts are provided by residues histidine 80 and 121–123 (GHS). Aspartate 152 provides a ligand contact to Mg(2+). Thiamine diphosphate contacts are provided by residues 153-154 (GA), asparagine 181, tyrosine 289, and glutamate 371. Residue asparagine 181 participates in Mg(2+) binding.

Belongs to the transketolase family. DXPS subfamily. In terms of assembly, homodimer. The cofactor is Mg(2+). Requires thiamine diphosphate as cofactor.

The catalysed reaction is D-glyceraldehyde 3-phosphate + pyruvate + H(+) = 1-deoxy-D-xylulose 5-phosphate + CO2. Its pathway is metabolic intermediate biosynthesis; 1-deoxy-D-xylulose 5-phosphate biosynthesis; 1-deoxy-D-xylulose 5-phosphate from D-glyceraldehyde 3-phosphate and pyruvate: step 1/1. Catalyzes the acyloin condensation reaction between C atoms 2 and 3 of pyruvate and glyceraldehyde 3-phosphate to yield 1-deoxy-D-xylulose-5-phosphate (DXP). The chain is 1-deoxy-D-xylulose-5-phosphate synthase from Blochmanniella pennsylvanica (strain BPEN).